A 332-amino-acid polypeptide reads, in one-letter code: DNA-directed RNA polymerase subunit alpha (332 aa).

Residues 1–230 form an alpha N-terminal domain (alpha-NTD) region; the sequence is MKKITTSAYM…KQMSIFNNVL (230 aa). An alpha C-terminal domain (alpha-CTD) region spans residues 246 to 332; it reads EHSKLLESVE…LRKKISELKS (87 aa).

Belongs to the RNA polymerase alpha chain family. Homodimer. The RNAP catalytic core consists of 2 alpha, 1 beta, 1 beta' and 1 omega subunit. When a sigma factor is associated with the core the holoenzyme is formed, which can initiate transcription.

It carries out the reaction RNA(n) + a ribonucleoside 5'-triphosphate = RNA(n+1) + diphosphate. In terms of biological role, DNA-dependent RNA polymerase catalyzes the transcription of DNA into RNA using the four ribonucleoside triphosphates as substrates. The sequence is that of DNA-directed RNA polymerase subunit alpha from Campylobacter fetus subsp. fetus (strain 82-40).